We begin with the raw amino-acid sequence, 447 residues long: Cysteine--tRNA ligase (447 aa).

Cysteine 28 is a binding site for Zn(2+). Positions 30–40 match the 'HIGH' region motif; sequence PTVYNYIHIGN. Residues cysteine 211, histidine 236, and glutamate 240 each coordinate Zn(2+). The 'KMSKS' region motif lies at 268-272; the sequence is KMSKS. Residue lysine 271 coordinates ATP.

The protein belongs to the class-I aminoacyl-tRNA synthetase family. In terms of assembly, monomer. It depends on Zn(2+) as a cofactor.

The protein localises to the cytoplasm. The enzyme catalyses tRNA(Cys) + L-cysteine + ATP = L-cysteinyl-tRNA(Cys) + AMP + diphosphate. The polypeptide is Cysteine--tRNA ligase (Streptococcus pyogenes serotype M1).